We begin with the raw amino-acid sequence, 948 residues long: Non-lysosomal glucosylceramidase (948 aa).

The Extracellular portion of the chain corresponds to 1 to 736; the sequence is MAEPLAVETK…VMDGPSAYCS (736 aa). Over residues 177 to 195 the composition is skewed to basic and acidic residues; sequence STRDKTSDPDGDPDGERTK. Positions 177–197 are disordered; that stretch reads STRDKTSDPDGDPDGERTKCQ. Asn200 carries an N-linked (GlcNAc...) asparagine glycan. Phosphoserine is present on Ser214. Asn288, Asn555, and Asn629 each carry an N-linked (GlcNAc...) asparagine glycan. Ser667 and Ser669 each carry phosphoserine. Residue Asn673 is glycosylated (N-linked (GlcNAc...) asparagine). The chain crosses the membrane as a helical span at residues 737 to 753; that stretch reads GLWLAALQAMSAMATIL. At 754–948 the chain is on the cytoplasmic side; the sequence is DQPNDCLRYQ…ALERRRAQRD (195 aa).

This sequence belongs to the non-lysosomal glucosylceramidase family.

Its subcellular location is the cell membrane. The enzyme catalyses a beta-D-glucosyl-(1&lt;-&gt;1')-N-acylsphing-4-enine + H2O = an N-acylsphing-4-enine + D-glucose. Functionally, non-lysosomal glucosylceramidase that catalyzes the conversion of glucosylceramide to free glucose and ceramide. The sequence is that of Non-lysosomal glucosylceramidase from Drosophila melanogaster (Fruit fly).